Here is a 432-residue protein sequence, read N- to C-terminus: Pachytene checkpoint protein 2 homolog (432 aa).

Met-1 carries the N-acetylmethionine modification. Residue 179 to 186 (GPPGTGKT) participates in ATP binding.

Belongs to the AAA ATPase family. PCH2 subfamily. Specifically interacts with the ligand binding domain of the thyroid receptor (TR). This interaction does not require the presence of thyroid hormone for its interaction. Interacts with proteasome subunit PSMA8; to participate in meiosis progression during spermatogenesis.

Functionally, plays a key role in chromosome recombination and chromosome structure development during meiosis. Required at early steps in meiotic recombination that leads to non-crossovers pathways. Also needed for efficient completion of homologous synapsis by influencing crossover distribution along the chromosomes affecting both crossovers and non-crossovers pathways. Also required for development of higher-order chromosome structures and is needed for synaptonemal-complex formation. In males, required for efficient synapsis of the sex chromosomes and for sex body formation. Promotes early steps of the DNA double-strand breaks (DSBs) repair process upstream of the assembly of RAD51 complexes. Required for depletion of HORMAD1 and HORMAD2 from synapsed chromosomes. Plays a role in mitotic spindle assembly checkpoint (SAC) activation. The sequence is that of Pachytene checkpoint protein 2 homolog (Trip13) from Rattus norvegicus (Rat).